The primary structure comprises 523 residues: 2-isopropylmalate synthase (523 aa).

Residues 5 to 267 (VIIFDTTLRD…HTNINHHEIW (263 aa)) form the Pyruvate carboxyltransferase domain. Mn(2+)-binding residues include D14, H202, H204, and N238. Residues 392-523 (RLDYFSVQSG…QNKENNKETV (132 aa)) form a regulatory domain region.

It belongs to the alpha-IPM synthase/homocitrate synthase family. LeuA type 1 subfamily. In terms of assembly, homodimer. It depends on Mn(2+) as a cofactor.

It is found in the cytoplasm. It carries out the reaction 3-methyl-2-oxobutanoate + acetyl-CoA + H2O = (2S)-2-isopropylmalate + CoA + H(+). The protein operates within amino-acid biosynthesis; L-leucine biosynthesis; L-leucine from 3-methyl-2-oxobutanoate: step 1/4. Catalyzes the condensation of the acetyl group of acetyl-CoA with 3-methyl-2-oxobutanoate (2-ketoisovalerate) to form 3-carboxy-3-hydroxy-4-methylpentanoate (2-isopropylmalate). The chain is 2-isopropylmalate synthase from Salmonella agona (strain SL483).